Consider the following 270-residue polypeptide: 4-hydroxy-tetrahydrodipicolinate reductase (270 aa).

NAD(+) is bound by residues glycine 9 to methionine 14 and glutamate 35. An NADP(+)-binding site is contributed by arginine 36. Residues glycine 99–threonine 101 and alanine 123–phenylalanine 126 contribute to the NAD(+) site. Histidine 156 functions as the Proton donor/acceptor in the catalytic mechanism. Histidine 157 serves as a coordination point for (S)-2,3,4,5-tetrahydrodipicolinate. The active-site Proton donor is the lysine 160. Glycine 166 to threonine 167 serves as a coordination point for (S)-2,3,4,5-tetrahydrodipicolinate.

It belongs to the DapB family.

It localises to the cytoplasm. It catalyses the reaction (S)-2,3,4,5-tetrahydrodipicolinate + NAD(+) + H2O = (2S,4S)-4-hydroxy-2,3,4,5-tetrahydrodipicolinate + NADH + H(+). It carries out the reaction (S)-2,3,4,5-tetrahydrodipicolinate + NADP(+) + H2O = (2S,4S)-4-hydroxy-2,3,4,5-tetrahydrodipicolinate + NADPH + H(+). It participates in amino-acid biosynthesis; L-lysine biosynthesis via DAP pathway; (S)-tetrahydrodipicolinate from L-aspartate: step 4/4. In terms of biological role, catalyzes the conversion of 4-hydroxy-tetrahydrodipicolinate (HTPA) to tetrahydrodipicolinate. This Haemophilus influenzae (strain ATCC 51907 / DSM 11121 / KW20 / Rd) protein is 4-hydroxy-tetrahydrodipicolinate reductase.